Here is a 452-residue protein sequence, read N- to C-terminus: Pup--protein ligase (452 aa).

A Mg(2+)-binding site is contributed by Glu-9. ATP is bound at residue Arg-53. A Mg(2+)-binding site is contributed by Tyr-55. Residue Asp-57 is the Proton acceptor of the active site. Mg(2+) is bound at residue Glu-63. Thr-66 and Trp-419 together coordinate ATP.

The protein belongs to the Pup ligase/Pup deamidase family. Pup-conjugating enzyme subfamily.

The enzyme catalyses ATP + [prokaryotic ubiquitin-like protein]-L-glutamate + [protein]-L-lysine = ADP + phosphate + N(6)-([prokaryotic ubiquitin-like protein]-gamma-L-glutamyl)-[protein]-L-lysine.. It participates in protein degradation; proteasomal Pup-dependent pathway. The protein operates within protein modification; protein pupylation. In terms of biological role, catalyzes the covalent attachment of the prokaryotic ubiquitin-like protein modifier Pup to the proteasomal substrate proteins, thereby targeting them for proteasomal degradation. This tagging system is termed pupylation. The ligation reaction involves the side-chain carboxylate of the C-terminal glutamate of Pup and the side-chain amino group of a substrate lysine. This Mycobacterium ulcerans (strain Agy99) protein is Pup--protein ligase.